The chain runs to 522 residues: DEP domain-containing protein 7 (522 aa).

The DEP domain maps to 46 to 138 (LYTQVEVKKR…SSCSLYRFLN (93 aa)).

It belongs to the DEPDC7 family.

The polypeptide is DEP domain-containing protein 7 (depdc7) (Xenopus laevis (African clawed frog)).